The primary structure comprises 155 residues: Ribosome maturation factor RimP (155 aa).

It belongs to the RimP family.

Its subcellular location is the cytoplasm. Required for maturation of 30S ribosomal subunits. The protein is Ribosome maturation factor RimP of Prochlorococcus marinus (strain AS9601).